Consider the following 298-residue polypeptide: Large ribosomal subunit protein uL18 (298 aa).

Belongs to the universal ribosomal protein uL18 family. In terms of assembly, component of the large ribosomal subunit. Mature ribosomes consist of a small (40S) and a large (60S) subunit. The 40S subunit contains about 32 different proteins and 1 molecule of RNA (18S). The 60S subunit contains 45 different proteins and 3 molecules of RNA (25S, 5.8S and 5S).

The protein resides in the cytoplasm. In terms of biological role, component of the ribosome, a large ribonucleoprotein complex responsible for the synthesis of proteins in the cell. The small ribosomal subunit (SSU) binds messenger RNAs (mRNAs) and translates the encoded message by selecting cognate aminoacyl-transfer RNA (tRNA) molecules. The large subunit (LSU) contains the ribosomal catalytic site termed the peptidyl transferase center (PTC), which catalyzes the formation of peptide bonds, thereby polymerizing the amino acids delivered by tRNAs into a polypeptide chain. The nascent polypeptides leave the ribosome through a tunnel in the LSU and interact with protein factors that function in enzymatic processing, targeting, and the membrane insertion of nascent chains at the exit of the ribosomal tunnel. In Candida albicans (strain SC5314 / ATCC MYA-2876) (Yeast), this protein is Large ribosomal subunit protein uL18.